Here is a 93-residue protein sequence, read N- to C-terminus: Transcription factor PRE3 (93 aa).

Residues 6–61 enclose the bHLH domain; sequence SRSRQSSGTSRISEDQINDLIIKLQQLLPELRDSRRSDKVSAARVLQDTCNYIRNL.

As to quaternary structure, homodimer. Interacts with BHLH 147, BHLH148, BHLH149, BHLH150 and IBH1. Interacts with SIEL. In terms of tissue distribution, expressed in root and shoot meristems, and young siliques. Low levels detected in all aerial tissues.

Its subcellular location is the nucleus. It is found in the cytoplasm. Its function is as follows. Atypical and probable non DNA-binding bHLH transcription factor required for MONOPTEROS-dependent root initiation in embryo. Promotes the correct definition of the hypophysis cell division plane. Transcriptionally controlled by MONOPTEROS. Moves from its site of synthesis in pro-embryos cells into the hypophysis. Regulates brassinosteroid (BR) signaling by sequestering negative BR signaling components. May function as positive regulator of gibberellin signaling. May play a role in the regulation of light signaling and possibly auxin signaling. The polypeptide is Transcription factor PRE3 (PRE3) (Arabidopsis thaliana (Mouse-ear cress)).